A 518-amino-acid chain; its full sequence is DNA nucleotidylexotransferase (518 aa).

The Nuclear localization signal motif lies at 11-17 (FGKKRQK). The 98-residue stretch at 27-124 (IYEIKFHEFV…KPVDTKGKYQ (98 aa)) folds into the BRCT domain. Positions 153 to 518 (SQYACQRRTT…EYIQPSERNA (366 aa)) are mediates interaction with DNTTIP2. The tract at residues 260 to 264 (VGLKT) is involved in DNA binding. A 2'-deoxyribonucleoside 5'-triphosphate-binding positions include 335 to 340 (GFRRGK) and 344 to 347 (HDVD). Mg(2+)-binding residues include D345, D347, and D442. Position 457–458 (457–458 (GW)) interacts with a 2'-deoxyribonucleoside 5'-triphosphate.

This sequence belongs to the DNA polymerase type-X family. In terms of assembly, interacts with PRP19 and DNTTIP1. Interacts with TRERF1. Forms a ternary complex with DNTTIP2 and core histone. Released from this complex by PCNA. Requires Mg(2+) as cofactor.

The protein resides in the nucleus. It catalyses the reaction DNA(n) + a 2'-deoxyribonucleoside 5'-triphosphate = DNA(n+1) + diphosphate. Its function is as follows. Template-independent DNA polymerase which catalyzes the random addition of deoxynucleoside 5'-triphosphate to the 3'-end of a DNA initiator. One of the in vivo functions of this enzyme is the addition of nucleotides at the junction (N region) of rearranged Ig heavy chain and T-cell receptor gene segments during the maturation of B- and T-cells. The protein is DNA nucleotidylexotransferase (DNTT) of Monodelphis domestica (Gray short-tailed opossum).